The following is a 437-amino-acid chain: Putative metabolite transport protein NicT (437 aa).

12 consecutive transmembrane segments (helical) span residues 28 to 48, 66 to 86, 93 to 113, 123 to 143, 152 to 172, 189 to 209, 254 to 274, 290 to 310, 320 to 340, 347 to 367, 374 to 394, and 411 to 431; these read LIPFLCFCYLAAYLDRINVGF, LGAGLFFVGYIIFEVPSNLIL, LWIARIMITWGLLSACTMFVT, FLLGAAEAGFLPGVLYYLTMW, IIALFMIGLPLSSVIGGPISG, WLFLLEAIPSVLLGILTFWAL, VWMLGGIDFSILLSAYAMGFW, IGLLTAIPSLAALAGMLMIGA, WHIIVPFIIGAIAMASSTLFS, VVLFAIASAAIIGAVPVFFSL, GTAAATGFALACSVANIAGLV, and AALWVFAGCLILSCFLVIALP.

It belongs to the major facilitator superfamily.

The protein localises to the membrane. Its function is as follows. Probable transporter, possibly involved in the aerobic nicotinate degradation pathway. This chain is Putative metabolite transport protein NicT (nicT), found in Pseudomonas putida (strain ATCC 47054 / DSM 6125 / CFBP 8728 / NCIMB 11950 / KT2440).